Reading from the N-terminus, the 64-residue chain is Large ribosomal subunit protein bL35 (64 aa).

2 stretches are compositionally biased toward basic residues: residues 1-15 and 23-42; these read MPKA…KRFR and VRQK…KRTR. The tract at residues 1–45 is disordered; sequence MPKAKTHSGASKRFRTTGSGKVVRQKANRRHLLEHKPTKRTRRLD.

The protein belongs to the bacterial ribosomal protein bL35 family.

In Mycolicibacterium vanbaalenii (strain DSM 7251 / JCM 13017 / BCRC 16820 / KCTC 9966 / NRRL B-24157 / PYR-1) (Mycobacterium vanbaalenii), this protein is Large ribosomal subunit protein bL35.